Here is a 179-residue protein sequence, read N- to C-terminus: Peptidyl-tRNA hydrolase 2, mitochondrial (179 aa).

A helical membrane pass occupies residues 15-37 (STLGLAVGVACGMCLGWSLRVCF). Glycyl lysine isopeptide (Lys-Gly) (interchain with G-Cter in ubiquitin) cross-links involve residues Lys-47, Lys-76, Lys-81, Lys-95, Lys-106, Lys-115, Lys-171, and Lys-177.

This sequence belongs to the PTH2 family. As to quaternary structure, monomer. In terms of processing, ubiquitinated by PRKN during mitophagy, leading to its degradation and enhancement of mitophagy. Deubiquitinated by USP30.

It localises to the mitochondrion outer membrane. The enzyme catalyses an N-acyl-L-alpha-aminoacyl-tRNA + H2O = an N-acyl-L-amino acid + a tRNA + H(+). Its function is as follows. Peptidyl-tRNA hydrolase which releases tRNAs from the ribosome during protein synthesis. Promotes caspase-independent apoptosis by regulating the function of two transcriptional regulators, AES and TLE1. In Homo sapiens (Human), this protein is Peptidyl-tRNA hydrolase 2, mitochondrial (PTRH2).